The chain runs to 451 residues: tRNA-2-methylthio-N(6)-dimethylallyladenosine synthase (451 aa).

Residues 6–122 (RRYHIITFGC…LDQLLEQVWA (117 aa)) form the MTTase N-terminal domain. The [4Fe-4S] cluster site is built by C15, C51, C85, C157, C161, and C164. A Radical SAM core domain is found at 143-384 (RESTVSAWVN…STQAMERSQR (242 aa)). A TRAM domain is found at 383–447 (QRYLGRVEEV…AFSLTGEALS (65 aa)).

It belongs to the methylthiotransferase family. MiaB subfamily. In terms of assembly, monomer. [4Fe-4S] cluster serves as cofactor.

The protein resides in the cytoplasm. The catalysed reaction is N(6)-dimethylallyladenosine(37) in tRNA + (sulfur carrier)-SH + AH2 + 2 S-adenosyl-L-methionine = 2-methylsulfanyl-N(6)-dimethylallyladenosine(37) in tRNA + (sulfur carrier)-H + 5'-deoxyadenosine + L-methionine + A + S-adenosyl-L-homocysteine + 2 H(+). Its function is as follows. Catalyzes the methylthiolation of N6-(dimethylallyl)adenosine (i(6)A), leading to the formation of 2-methylthio-N6-(dimethylallyl)adenosine (ms(2)i(6)A) at position 37 in tRNAs that read codons beginning with uridine. In Synechocystis sp. (strain ATCC 27184 / PCC 6803 / Kazusa), this protein is tRNA-2-methylthio-N(6)-dimethylallyladenosine synthase.